A 994-amino-acid chain; its full sequence is Phosphoenolpyruvate carboxylase (994 aa).

Residues 1–67 (MKAVRSDKTT…GRTREDKDHP (67 aa)) form a disordered region. Low complexity-rich tracts occupy residues 9 to 24 (TTQA…PAKA) and 34 to 57 (AAPQ…PKAN). Catalysis depends on residues His204 and Lys646.

Belongs to the PEPCase type 1 family. It depends on Mg(2+) as a cofactor.

It catalyses the reaction oxaloacetate + phosphate = phosphoenolpyruvate + hydrogencarbonate. Functionally, forms oxaloacetate, a four-carbon dicarboxylic acid source for the tricarboxylic acid cycle. The protein is Phosphoenolpyruvate carboxylase of Paraburkholderia xenovorans (strain LB400).